Here is a 612-residue protein sequence, read N- to C-terminus: Elongation factor 4 (612 aa).

Residues 12 to 194 (SRIRNFSIIA…QIVEKVPAPS (183 aa)) enclose the tr-type G domain. GTP is bound by residues 24–29 (DHGKST) and 141–144 (NKID).

It belongs to the TRAFAC class translation factor GTPase superfamily. Classic translation factor GTPase family. LepA subfamily.

It localises to the cell membrane. It catalyses the reaction GTP + H2O = GDP + phosphate + H(+). Its function is as follows. Required for accurate and efficient protein synthesis under certain stress conditions. May act as a fidelity factor of the translation reaction, by catalyzing a one-codon backward translocation of tRNAs on improperly translocated ribosomes. Back-translocation proceeds from a post-translocation (POST) complex to a pre-translocation (PRE) complex, thus giving elongation factor G a second chance to translocate the tRNAs correctly. Binds to ribosomes in a GTP-dependent manner. This is Elongation factor 4 from Bacillus licheniformis (strain ATCC 14580 / DSM 13 / JCM 2505 / CCUG 7422 / NBRC 12200 / NCIMB 9375 / NCTC 10341 / NRRL NRS-1264 / Gibson 46).